Here is a 298-residue protein sequence, read N- to C-terminus: Transcription factor BOA (298 aa).

Disordered stretches follow at residues 1 to 26, 79 to 143, and 206 to 232; these read MGKE…EYRI, LRSS…KRPR, and EDPY…GGGS. The segment covering 10–20 has biased composition (acidic residues); that stretch reads YGDDDGEDAGG. Positions 104 to 113 are enriched in basic and acidic residues; sequence DPKKQKKSDG. Residues 122-131 show a composition bias toward acidic residues; that stretch reads STAEEGDSGP. A DNA-binding region (myb-like GARP) is located at residues 138-197; it reads TSKRPRLVWTPQLHKRFVDVVAHLGIKNAVPKTIMQLMNVEGLTRENVASHLQKYRLYLK. Positions 209 to 227 are enriched in polar residues; sequence YSSSDQLFSSTPVPPQSFQ.

It is found in the nucleus. Functionally, transcription factor that is a critical component of the regulatory circuit of the circadian clock. Binds to specific sites on CCA1 promoter leading to CCA1 activation. Is required for the rhythmic expression of other clock genes such as LHY, GI and APRR1/TOC1. This chain is Transcription factor BOA (BOA), found in Arabidopsis thaliana (Mouse-ear cress).